We begin with the raw amino-acid sequence, 337 residues long: Formamidase (337 aa).

The 244-residue stretch at 14–257 (VVIGLVQLQL…DEIITAEVRP (244 aa)) folds into the CN hydrolase domain. Glu-60 serves as the catalytic Proton acceptor. The active-site Proton donor is Lys-129. Catalysis depends on Cys-162, which acts as the Nucleophile.

It belongs to the carbon-nitrogen hydrolase superfamily. Aliphatic amidase family.

The catalysed reaction is formamide + H2O = formate + NH4(+). Functionally, is an aliphatic amidase with a restricted substrate specificity, as it only hydrolyzes formamide. The polypeptide is Formamidase (Bradyrhizobium diazoefficiens (strain JCM 10833 / BCRC 13528 / IAM 13628 / NBRC 14792 / USDA 110)).